A 210-amino-acid polypeptide reads, in one-letter code: Holliday junction branch migration complex subunit RuvA (210 aa).

Residues 1–70 form a domain I region; sequence MISYLKGNPI…DEQPILYGFA (70 aa). The tract at residues 71–149 is domain II; it reads TAAERELFRQ…QWRKLVGITL (79 aa). The segment at 150-160 is flexible linker; the sequence is PSTSAIPSLEV. A domain III region spans residues 160 to 210; sequence VLEDVEMTLLALGYTNEEINKAISTLSQDNQMLKNTNSEEWIREAIAWLSQ.

The protein belongs to the RuvA family. In terms of assembly, homotetramer. Forms an RuvA(8)-RuvB(12)-Holliday junction (HJ) complex. HJ DNA is sandwiched between 2 RuvA tetramers; dsDNA enters through RuvA and exits via RuvB. An RuvB hexamer assembles on each DNA strand where it exits the tetramer. Each RuvB hexamer is contacted by two RuvA subunits (via domain III) on 2 adjacent RuvB subunits; this complex drives branch migration. In the full resolvosome a probable DNA-RuvA(4)-RuvB(12)-RuvC(2) complex forms which resolves the HJ.

It is found in the cytoplasm. In terms of biological role, the RuvA-RuvB-RuvC complex processes Holliday junction (HJ) DNA during genetic recombination and DNA repair, while the RuvA-RuvB complex plays an important role in the rescue of blocked DNA replication forks via replication fork reversal (RFR). RuvA specifically binds to HJ cruciform DNA, conferring on it an open structure. The RuvB hexamer acts as an ATP-dependent pump, pulling dsDNA into and through the RuvAB complex. HJ branch migration allows RuvC to scan DNA until it finds its consensus sequence, where it cleaves and resolves the cruciform DNA. In Rippkaea orientalis (strain PCC 8801 / RF-1) (Cyanothece sp. (strain PCC 8801)), this protein is Holliday junction branch migration complex subunit RuvA.